A 468-amino-acid chain; its full sequence is 6-phosphogluconate dehydrogenase, decarboxylating (468 aa).

Residues 10-15 (GMAVMG), 33-35 (NRS), 74-76 (VKA), and Asn102 contribute to the NADP(+) site. Substrate is bound by residues Asn102 and 128-130 (SGG). The active-site Proton acceptor is Lys183. A substrate-binding site is contributed by 186 to 187 (HN). Glu190 functions as the Proton donor in the catalytic mechanism. Residues Tyr191, Lys260, Arg287, Arg445, and His451 each coordinate substrate.

It belongs to the 6-phosphogluconate dehydrogenase family. In terms of assembly, homodimer.

The enzyme catalyses 6-phospho-D-gluconate + NADP(+) = D-ribulose 5-phosphate + CO2 + NADPH. It participates in carbohydrate degradation; pentose phosphate pathway; D-ribulose 5-phosphate from D-glucose 6-phosphate (oxidative stage): step 3/3. In terms of biological role, catalyzes the oxidative decarboxylation of 6-phosphogluconate to ribulose 5-phosphate and CO(2), with concomitant reduction of NADP to NADPH. The chain is 6-phosphogluconate dehydrogenase, decarboxylating (gnd) from Klebsiella pneumoniae.